The primary structure comprises 487 residues: Probable glycine dehydrogenase (decarboxylating) subunit 2 (487 aa).

Position 273 is an N6-(pyridoxal phosphate)lysine (Lys273).

The protein belongs to the GcvP family. C-terminal subunit subfamily. In terms of assembly, the glycine cleavage system is composed of four proteins: P, T, L and H. In this organism, the P 'protein' is a heterodimer of two subunits. Pyridoxal 5'-phosphate is required as a cofactor.

It carries out the reaction N(6)-[(R)-lipoyl]-L-lysyl-[glycine-cleavage complex H protein] + glycine + H(+) = N(6)-[(R)-S(8)-aminomethyldihydrolipoyl]-L-lysyl-[glycine-cleavage complex H protein] + CO2. In terms of biological role, the glycine cleavage system catalyzes the degradation of glycine. The P protein binds the alpha-amino group of glycine through its pyridoxal phosphate cofactor; CO(2) is released and the remaining methylamine moiety is then transferred to the lipoamide cofactor of the H protein. The chain is Probable glycine dehydrogenase (decarboxylating) subunit 2 from Lysinibacillus sphaericus (strain C3-41).